Consider the following 219-residue polypeptide: Uracil-DNA glycosylase (219 aa).

The active-site Proton acceptor is D61.

This sequence belongs to the uracil-DNA glycosylase (UDG) superfamily. UNG family.

The protein localises to the cytoplasm. It catalyses the reaction Hydrolyzes single-stranded DNA or mismatched double-stranded DNA and polynucleotides, releasing free uracil.. Its function is as follows. Excises uracil residues from the DNA which can arise as a result of misincorporation of dUMP residues by DNA polymerase or due to deamination of cytosine. This is Uracil-DNA glycosylase from Haemophilus influenzae (strain PittEE).